The primary structure comprises 123 residues: Large ribosomal subunit protein uL18 (123 aa).

The protein belongs to the universal ribosomal protein uL18 family. As to quaternary structure, part of the 50S ribosomal subunit; part of the 5S rRNA/L5/L18/L25 subcomplex. Contacts the 5S and 23S rRNAs.

Functionally, this is one of the proteins that bind and probably mediate the attachment of the 5S RNA into the large ribosomal subunit, where it forms part of the central protuberance. The sequence is that of Large ribosomal subunit protein uL18 from Chlamydia pneumoniae (Chlamydophila pneumoniae).